A 963-amino-acid chain; its full sequence is MEGGRGGGDGNFLPNSNFGVFSDSAMDMDFMDELLFDGCWLETTDGKSLKQTMGQQVSDSTTMNDNNNNSYLYGYQYAENLSQDHISNEETGRKFPPIPPGFLKIEDLSNQVPFDQSAVMSSAQAEKFLLEESEGGRRYWIAPRTSQGPSSSVKERLVQAIEGLNEEVQDKDFLIQIWLPIQQEGKNFLTTSEQPHFFNPKYSSLKRYRDVSVAYNFLADEDSKESVGLPGRVFLKKLPEWTPDVRFFRSEEYPRIKEAEQCDVRGSLALPVFERGSGTCLGVVEIVTTTQKMNYRPELDNICKALESVNLRSSRSLNPPSREFLQVYNEFYYAALPEVSEFLTLVCRVYDLPLALTWAPCARQGKVGSRHSDENFSECVSTVDDACIVPDHQSRHFLEACSEHHLLQGEGIVGKAFNATKLFFVPEVTTFSKTNYPLAHHAKISGLHAALAVPLKNKFNSSVEFVLEFFFPKACLDTEAQQDMLKSLSATLQQDFRSLNLFIDKELELEVVFPVREEVVFAENPLINAGTGEDMKPLPLEEISQEDSSWISHMIKANEKGKGVSLSWEYQKEEPKEEFMLTSGWDNNQIGSGHNNFLSEAEQFQKVTNSGLRIDMDPSFESASFGVGQTLLGSRRPGEKRRTKTEKTIGLEVLRQYFAGSLKDAAKSIGVCPTTLKRICRQHGITRWPSRKIKKVGHSLKKLQLVIDSVQGVQGSIQLDSFYTSFPELSSPHMSGTGTSFKNPNAQTENGVSAQGTAAAPKSPPSSSCSHSSGSSTCCSTGANQSTNTGTTSNTVTTLMAENASAILKRARSEVRLHTMNQDETKSLSRTLSHKTFSEHPLFENPPRLPENSSRKLKAGGASKVKATFGEAKVRFTLLPTWGFRELQHEIARRFNIDNIAPFDLKYLDDDKEWVLLTCEADLEECIDIYRSSQSRTIKISVHEASQVKLGGSFGSIGLGPSL.

An RWP-RK domain is found at 635 to 716; it reads RRPGEKRRTK…IDSVQGVQGS (82 aa). Polar residues predominate over residues 734–755; sequence MSGTGTSFKNPNAQTENGVSAQ. The segment at 734-794 is disordered; the sequence is MSGTGTSFKN…QSTNTGTTSN (61 aa). Over residues 756–794 the composition is skewed to low complexity; sequence GTAAAPKSPPSSSCSHSSGSSTCCSTGANQSTNTGTTSN. The region spanning 862–945 is the PB1 domain; the sequence is ASKVKATFGE…RTIKISVHEA (84 aa).

The protein resides in the nucleus. Functionally, probable transcription factor. The chain is Protein NLP2 (NLP2) from Arabidopsis thaliana (Mouse-ear cress).